The primary structure comprises 314 residues: tRNA dimethylallyltransferase (314 aa).

An ATP-binding site is contributed by 13–20; that stretch reads GPTAVGKT. A substrate-binding site is contributed by 15–20; the sequence is TAVGKT. The interval 38-41 is interaction with substrate tRNA; it reads DSMQ.

This sequence belongs to the IPP transferase family. As to quaternary structure, monomer. Mg(2+) is required as a cofactor.

It carries out the reaction adenosine(37) in tRNA + dimethylallyl diphosphate = N(6)-dimethylallyladenosine(37) in tRNA + diphosphate. Catalyzes the transfer of a dimethylallyl group onto the adenine at position 37 in tRNAs that read codons beginning with uridine, leading to the formation of N6-(dimethylallyl)adenosine (i(6)A). The sequence is that of tRNA dimethylallyltransferase from Bacillus licheniformis (strain ATCC 14580 / DSM 13 / JCM 2505 / CCUG 7422 / NBRC 12200 / NCIMB 9375 / NCTC 10341 / NRRL NRS-1264 / Gibson 46).